Reading from the N-terminus, the 357-residue chain is Phosphoribosylformylglycinamidine cyclo-ligase (357 aa).

Belongs to the AIR synthase family.

It is found in the cytoplasm. It catalyses the reaction 2-formamido-N(1)-(5-O-phospho-beta-D-ribosyl)acetamidine + ATP = 5-amino-1-(5-phospho-beta-D-ribosyl)imidazole + ADP + phosphate + H(+). Its pathway is purine metabolism; IMP biosynthesis via de novo pathway; 5-amino-1-(5-phospho-D-ribosyl)imidazole from N(2)-formyl-N(1)-(5-phospho-D-ribosyl)glycinamide: step 2/2. The chain is Phosphoribosylformylglycinamidine cyclo-ligase from Rhizobium leguminosarum.